Reading from the N-terminus, the 500-residue chain is MNIRPEEVSSIIKKEIDNYKKSLEIKTSGTVLEVGDGIARIFGLSNVMSGELLEFPHGVMGMALNLEEDNVGAVILGNASLIKEGDEVRATGKVVSVPAGEDLLGRVINALGDPIDGKGEIHVDKYMPIERKASGIIARQPVSEPLQTGIKSIDGMVPIGRGQRELIIGDRQTGKTAIAIDTIINQKGQDVKCIYVAIGQKRSTVAQIYKKLSDLGCMDYTIIVAATASEAAPLQYMAPYSGVAIGEYFMEKGEHVLIIYDDLSKHAVAYREMSLLLRRPPGREAYPGDVFYLHSRLLERAAKLSDELGGGSITALPIIETQAGDVSAYIPTNVISITDGQIFLESQLFNSGFRPAINAGISVSRVGGAAQIKAMKQVASKVKLELAQYTELLTFAQFGSDLDKATKAQLERGHRIMEILKQPQYHPFAVERQVVSFYIVINGHLDDIEVSKVRRFEKELLDYLKANTNILTEIADKKALDKDLEEKLKESIANFKKSFN.

169-176 (GDRQTGKT) contacts ATP.

This sequence belongs to the ATPase alpha/beta chains family. F-type ATPases have 2 components, CF(1) - the catalytic core - and CF(0) - the membrane proton channel. CF(1) has five subunits: alpha(3), beta(3), gamma(1), delta(1), epsilon(1). CF(0) has three main subunits: a(1), b(2) and c(9-12). The alpha and beta chains form an alternating ring which encloses part of the gamma chain. CF(1) is attached to CF(0) by a central stalk formed by the gamma and epsilon chains, while a peripheral stalk is formed by the delta and b chains.

The protein resides in the cell inner membrane. The catalysed reaction is ATP + H2O + 4 H(+)(in) = ADP + phosphate + 5 H(+)(out). Functionally, produces ATP from ADP in the presence of a proton gradient across the membrane. The alpha chain is a regulatory subunit. The sequence is that of ATP synthase subunit alpha from Fusobacterium nucleatum subsp. nucleatum (strain ATCC 25586 / DSM 15643 / BCRC 10681 / CIP 101130 / JCM 8532 / KCTC 2640 / LMG 13131 / VPI 4355).